Reading from the N-terminus, the 203-residue chain is MPTMSRPALDVKGGTTSGKEDANQEMNSLAYSNLGVKDRKAVTVLHYPGVTANGAKANGVPTSSSGSTSPIGSPTATPSSKPPSFNLHPTPHLMASMQLQKLNSQYQGAAATAAAALTGAGLPGEEEPMQNWVTAPLVVGGSPGSVSPPAGAQSPALIDSDPVDEEVLMSLVVELGLDRANELPELWLGQNEFDFTADFPSGC.

Disordered stretches follow at residues 1-24 and 51-86; these read MPTM…DANQ and TANG…PSFN. Positions 61–84 are enriched in low complexity; that stretch reads PTSSSGSTSPIGSPTATPSSKPPS. The Nuclear export signal motif lies at 168–177; the sequence is LMSLVVELGL.

It belongs to the CITED family. Homodimer. Binds to RBM14. Interacts (via N-terminus) with HSPA8; the interaction suppresses the association of CITED1 with p300/CBP and SMAD-mediated transcription transactivation. Interacts (via C-terminus) with TOX3 (via HGM box); the interaction increases estrogen-response element (ERE)-dependent transcription and protection against cell death. Interacts with ESR1; the interaction occurs in a estrogen-dependent manner. Interacts (unphosphorylated form preferentially and via C-terminus) with EP300. Interacts (via C-terminus) with CREBBP. Interacts with EGR2. In terms of processing, phosphorylated. Phosphorylation changes in a cell cycle-dependent manner and reduces its transcriptional cofactor activity. In terms of tissue distribution, expressed in calvarial osteoblasts. Expressed in nulliparous mammary epithelial cells; absent in pregnant mice and in lacting mammary glands. Also expressed in mammary tumors (at protein level). Expressed only in melanocytes and testis. Expressed at high levels in the strongly pigmented melanoma cells but at low levels in the weakly pigmented cells.

It is found in the nucleus. The protein resides in the cytoplasm. Transcriptional coactivator of the p300/CBP-mediated transcription complex. Enhances SMAD-mediated transcription by strengthening the functional link between the DNA-binding SMAD transcription factors and the p300/CBP transcription coactivator complex. Stimulates estrogen-dependent transactivation activity mediated by estrogen receptors signaling; stabilizes the interaction of estrogen receptor ESR1 and histone acetyltransferase EP300. Positively regulates TGF-beta signaling through its association with the SMAD/p300/CBP-mediated transcriptional coactivator complex. Induces transcription from estrogen-responsive promoters and protection against cell death. Potentiates EGR2-mediated transcriptional activation activity from the ERBB2 promoter. Acts as an inhibitor of osteoblastic mineralization through a cAMP-dependent parathyroid hormone receptor signaling. May play a role in pigmentation of melanocytes. Associates with chromatin to the estrogen-responsive TGF-alpha promoter region in a estrogen-dependent manner. The polypeptide is Cbp/p300-interacting transactivator 1 (Cited1) (Mus musculus (Mouse)).